A 307-amino-acid polypeptide reads, in one-letter code: Glutathione synthetase (307 aa).

Positions 120–304 (KLGALRYSHL…VSDKVIEKLL (185 aa)) constitute an ATP-grasp domain. 146 to 202 (AQINHDVVVKPLGGKGGQGVIRLTKDSPGIKAMIELITSQEQLPVMMQKFIPEVKEG) provides a ligand contact to ATP. 2 residues coordinate Mg(2+): E275 and N277.

This sequence belongs to the prokaryotic GSH synthase family. Requires Mg(2+) as cofactor. Mn(2+) is required as a cofactor.

The catalysed reaction is gamma-L-glutamyl-L-cysteine + glycine + ATP = glutathione + ADP + phosphate + H(+). The protein operates within sulfur metabolism; glutathione biosynthesis; glutathione from L-cysteine and L-glutamate: step 2/2. The sequence is that of Glutathione synthetase from Prochlorococcus marinus subsp. pastoris (strain CCMP1986 / NIES-2087 / MED4).